Consider the following 310-residue polypeptide: MDRKELLSKPVQDLRIDGNTTLSNLMAQFSNIGGFTAAKLYEAHSIISDMFLEDNTTFLSFPADIISTGLRGLINDVVKRKLVDVIITTSGTLDHDIARTFGKYYCGSFNYSDVELREININRLGNVLVPDESYGELIEEKVMEQLEKLYSIKKEWATVDLIKEIGLSINNESSILYNAAKNDIPIFVPGITDGSFGSQLWSFYEQHHDFKINLLEDEHRLSDIIFDAKKTGAIMVGGGISKHHTIWWNQFRDGLDYAVYITTAQEYDGSLSGAKLEEAISWKKVRPNARFVNIYGDATVIMPILMAPFL.

Lys284 functions as the Nucleophile in the catalytic mechanism.

This sequence belongs to the deoxyhypusine synthase family. It depends on NAD(+) as a cofactor.

The enzyme catalyses [eIF5A protein]-L-lysine + spermidine = [eIF5A protein]-deoxyhypusine + propane-1,3-diamine. Its pathway is protein modification; eIF5A hypusination. Catalyzes the NAD-dependent oxidative cleavage of spermidine and the subsequent transfer of the butylamine moiety of spermidine to the epsilon-amino group of a specific lysine residue of the eIF-5A precursor protein to form the intermediate deoxyhypusine residue. This chain is Probable deoxyhypusine synthase (dys), found in Thermoplasma volcanium (strain ATCC 51530 / DSM 4299 / JCM 9571 / NBRC 15438 / GSS1).